The following is a 1215-amino-acid chain: Kinesin-like protein KIN-7I (1215 aa).

Residues 3 to 327 (RIHVAVRARP…LQFASRALRV (325 aa)) enclose the Kinesin motor domain. 79-86 (GQTNSGKT) is an ATP binding site. Coiled-coil stretches lie at residues 333 to 414 (VNEI…IENL), 571 to 646 (ESEA…AAYE), 708 to 855 (IRDY…KRDS), and 894 to 979 (DMEA…KEDM).

Belongs to the TRAFAC class myosin-kinesin ATPase superfamily. Kinesin family. KIN-7 subfamily.

This is Kinesin-like protein KIN-7I from Oryza sativa subsp. japonica (Rice).